A 388-amino-acid chain; its full sequence is Mannitol-1-phosphate 5-dehydrogenase (388 aa).

NAD(+) is bound at residue 5–16; it reads AIQFGGGNIGRG. K213 is a catalytic residue.

The protein belongs to the mannitol dehydrogenase family. In terms of assembly, monomer.

It catalyses the reaction D-mannitol 1-phosphate + NAD(+) = beta-D-fructose 6-phosphate + NADH + H(+). Catalyzes the NAD(H)-dependent interconversion of D-fructose 6-phosphate and D-mannitol 1-phosphate in the mannitol metabolic pathway. The protein is Mannitol-1-phosphate 5-dehydrogenase (mpdA) of Aspergillus terreus (strain NIH 2624 / FGSC A1156).